Here is a 267-residue protein sequence, read N- to C-terminus: Phosphatidylglycerol--prolipoprotein diacylglyceryl transferase (267 aa).

The next 7 helical transmembrane spans lie at 17 to 37, 56 to 76, 91 to 111, 120 to 140, 173 to 193, 199 to 219, and 236 to 256; these read LNIRWYGLMYILGFVAAWLLA, LVTYSVFGVILGGRLGYTLFY, IWNGGMSFHGGLLGVIIAIWL, LFEVGDFTAPLVAPGLLAGRL, QLYEAALEGVALFIILWLFSA, MAVSGMFLLLYGSFRFFVEFF, and MGQILCLPMILGGLVLVGFAM. R139 provides a ligand contact to a 1,2-diacyl-sn-glycero-3-phospho-(1'-sn-glycerol).

This sequence belongs to the Lgt family.

The protein localises to the cell inner membrane. It carries out the reaction L-cysteinyl-[prolipoprotein] + a 1,2-diacyl-sn-glycero-3-phospho-(1'-sn-glycerol) = an S-1,2-diacyl-sn-glyceryl-L-cysteinyl-[prolipoprotein] + sn-glycerol 1-phosphate + H(+). The protein operates within protein modification; lipoprotein biosynthesis (diacylglyceryl transfer). Its function is as follows. Catalyzes the transfer of the diacylglyceryl group from phosphatidylglycerol to the sulfhydryl group of the N-terminal cysteine of a prolipoprotein, the first step in the formation of mature lipoproteins. In Oleidesulfovibrio alaskensis (strain ATCC BAA-1058 / DSM 17464 / G20) (Desulfovibrio alaskensis), this protein is Phosphatidylglycerol--prolipoprotein diacylglyceryl transferase.